A 343-amino-acid chain; its full sequence is Dihydroorotate dehydrogenase (quinone) (343 aa).

FMN contacts are provided by residues 58–62 (AGYDK) and S82. K62 contributes to the substrate binding site. 107-111 (NRMGF) lines the substrate pocket. The FMN site is built by N136 and N167. Position 167 (N167) interacts with substrate. S170 acts as the Nucleophile in catalysis. Residue N172 participates in substrate binding. FMN is bound by residues K206 and S234. Position 235 to 236 (235 to 236 (NT)) interacts with substrate. FMN is bound by residues G256, G285, and 306 to 307 (YS).

The protein belongs to the dihydroorotate dehydrogenase family. Type 2 subfamily. Monomer. FMN serves as cofactor.

The protein localises to the cell membrane. The catalysed reaction is (S)-dihydroorotate + a quinone = orotate + a quinol. It functions in the pathway pyrimidine metabolism; UMP biosynthesis via de novo pathway; orotate from (S)-dihydroorotate (quinone route): step 1/1. In terms of biological role, catalyzes the conversion of dihydroorotate to orotate with quinone as electron acceptor. The sequence is that of Dihydroorotate dehydrogenase (quinone) from Erythrobacter litoralis (strain HTCC2594).